A 506-amino-acid polypeptide reads, in one-letter code: Tripartite terminase subunit 3 (506 aa).

The active-site For ATPase activity is the E128. Residues D282, E354, and D475 each act as for nuclease activity in the active site.

The protein belongs to the herpesviridae TRM3 protein family. Interacts with the terminase subunits TRM1 and TRM2. Interacts with portal protein.

It localises to the host nucleus. Component of the molecular motor that translocates viral genomic DNA in empty capsid during DNA packaging. Forms a tripartite terminase complex together with TRM1 and TRM2 in the host cytoplasm. Once the complex reaches the host nucleus, it interacts with the capsid portal vertex. This portal forms a ring in which genomic DNA is translocated into the capsid. TRM3 carries an RNase H-like nuclease activity that plays an important role for the cleavage of concatemeric viral DNA into unit length genomes. This is Tripartite terminase subunit 3 from Amazona oratrix (yellow-headed parrot).